A 556-amino-acid chain; its full sequence is Genetic interactor of prohibitins 3, mitochondrial (556 aa).

The N-terminal 21 residues, 1-21 (MLNLCHALRGVRQFSCSVIVK), are a transit peptide targeting the mitochondrion. The 193-residue stretch at 113-305 (ESTLNDILNY…LFDLPGYSTS (193 aa)) folds into the CP-type G domain.

Belongs to the TRAFAC class YlqF/YawG GTPase family. GEP3 subfamily.

It is found in the mitochondrion. Interacts genetically with prohibitins and thus may be involved in the mitochondrial lipid metabolism. The polypeptide is Genetic interactor of prohibitins 3, mitochondrial (GEP3) (Saccharomyces cerevisiae (strain Zymaflore VL3) (Baker's yeast)).